Here is a 991-residue protein sequence, read N- to C-terminus: Mediator of RNA polymerase II transcription subunit 5 (991 aa).

Belongs to the Mediator complex subunit 5 family. As to quaternary structure, component of the Mediator complex.

The protein resides in the nucleus. Its function is as follows. Component of the Mediator complex, a coactivator involved in the regulated transcription of nearly all RNA polymerase II-dependent genes. Mediator functions as a bridge to convey information from gene-specific regulatory proteins to the basal RNA polymerase II transcription machinery. Mediator is recruited to promoters by direct interactions with regulatory proteins and serves as a scaffold for the assembly of a functional preinitiation complex with RNA polymerase II and the general transcription factors. The sequence is that of Mediator of RNA polymerase II transcription subunit 5 (NUT1) from Yarrowia lipolytica (strain CLIB 122 / E 150) (Yeast).